The chain runs to 71 residues: Large ribosomal subunit protein uL29 (71 aa).

This sequence belongs to the universal ribosomal protein uL29 family.

The protein is Large ribosomal subunit protein uL29 of Rickettsia typhi (strain ATCC VR-144 / Wilmington).